The sequence spans 339 residues: Homocysteine S-methyltransferase 2 (339 aa).

The Hcy-binding domain occupies 12–326 (AVRRWVDAAG…NTIRAIHRTL (315 aa)). Residues Cys244, Cys311, and Cys312 each coordinate Zn(2+).

Monomer. It depends on Zn(2+) as a cofactor.

The catalysed reaction is S-methyl-L-methionine + L-homocysteine = 2 L-methionine + H(+). Its function is as follows. Catalyzes methyl transfer from S-methylmethionine (SMM) to adenosyl-L-homocysteine (AdoMet). SMM degradation (by HMT-1, HMT-2, HMT-3 and HMT-4) and biosynthesis (by MMT1) constitute the SMM cycle in plants, which is probably required to achieve short term control of AdoMet level. This Zea mays (Maize) protein is Homocysteine S-methyltransferase 2 (HMT-2).